The chain runs to 585 residues: MRSHYCTDLSKADIGKEVILCGWANTYRDHGGVVFIDLRDVSGLIQLVCDPADSKEAHDVAAKVRDEYVLKAKGKVRARGEGLTNPKLKTGEIEVIVSELIIENPSEPLPFMIGDESVNEDIRLKYRFLDLRSERLQNIFKMRSRAAIAARNSLDKMGFIEFETPVLTRATPEGARDYLVPSRVYPGQFYALPQSPQLFKQLLMCSGFDKYFQIAKCFRDEDLRADRQPEFTQIDIEMSFVEQEDIINMAETMLKDIFKACGHDIKTPFRRMSYKEATETYGSDKPDLRYDLKMIDVIDIFERSSNEIFSSIAKDKKKNRIKALKVPNGDNIFSKREMNRFEEFVRKFGAQGLGYFQMKEDGLKGPLCKFFEQSDLDEIVSRCELKVGDVVFFGAGKKKIVLDYMGRFRIFLAEQMGIIDQDRLEFLWVLDFPMFEQNDDGSYSAMHHPFTMPKNIDEPDLEDILSIAHDVVLNGFELGGGSIRIHKNDIQQKVFKLLGIDEAEQREKFGFLLDALTFGAPPHGGIAIGFDRLNMLVNKASSIRDVIAFPKTQRAQCPLTKAPSYASNEQLRELGLRIREKEQKA.

An L-aspartate-binding site is contributed by E173. The interval 197-200 (QLFK) is aspartate. Residue R219 coordinates L-aspartate. ATP contacts are provided by residues 219 to 221 (RDE) and Q228. H447 contacts L-aspartate. E477 contacts ATP. Position 484 (R484) interacts with L-aspartate. 529–532 (GFDR) serves as a coordination point for ATP.

Belongs to the class-II aminoacyl-tRNA synthetase family. Type 1 subfamily. As to quaternary structure, homodimer.

The protein localises to the cytoplasm. It carries out the reaction tRNA(Asx) + L-aspartate + ATP = L-aspartyl-tRNA(Asx) + AMP + diphosphate. Its function is as follows. Aspartyl-tRNA synthetase with relaxed tRNA specificity since it is able to aspartylate not only its cognate tRNA(Asp) but also tRNA(Asn). Reaction proceeds in two steps: L-aspartate is first activated by ATP to form Asp-AMP and then transferred to the acceptor end of tRNA(Asp/Asn). In Campylobacter concisus (strain 13826), this protein is Aspartate--tRNA(Asp/Asn) ligase.